A 473-amino-acid chain; its full sequence is Photosystem II CP43 reaction center protein (473 aa).

Residues 1–14 constitute a propeptide that is removed on maturation; it reads MKTLYSLRRFYPVE. Thr15 bears the N-acetylthreonine mark. Thr15 carries the phosphothreonine modification. The next 5 membrane-spanning stretches (helical) occupy residues 69 to 93, 134 to 155, 178 to 200, 255 to 275, and 291 to 312; these read LFEVAHFVPEKPMYEQGLILLPHLA, LLGPETLEESFPFFGYVWKDRN, KALYFGGVYDTWAPGGGDVRKIT, KPFAWARRAFVWSGEAYLSYS, and WFNNTAYPSEFYGPTGPEASQA. Glu367 contacts [CaMn4O5] cluster. Residues 447-471 traverse the membrane as a helical segment; the sequence is RARAAAAGFEKGIDRDFEPVLSMTP.

Belongs to the PsbB/PsbC family. PsbC subfamily. As to quaternary structure, PSII is composed of 1 copy each of membrane proteins PsbA, PsbB, PsbC, PsbD, PsbE, PsbF, PsbH, PsbI, PsbJ, PsbK, PsbL, PsbM, PsbT, PsbX, PsbY, PsbZ, Psb30/Ycf12, at least 3 peripheral proteins of the oxygen-evolving complex and a large number of cofactors. It forms dimeric complexes. Binds multiple chlorophylls and provides some of the ligands for the Ca-4Mn-5O cluster of the oxygen-evolving complex. It may also provide a ligand for a Cl- that is required for oxygen evolution. PSII binds additional chlorophylls, carotenoids and specific lipids. serves as cofactor.

Its subcellular location is the plastid. It localises to the chloroplast thylakoid membrane. In terms of biological role, one of the components of the core complex of photosystem II (PSII). It binds chlorophyll and helps catalyze the primary light-induced photochemical processes of PSII. PSII is a light-driven water:plastoquinone oxidoreductase, using light energy to abstract electrons from H(2)O, generating O(2) and a proton gradient subsequently used for ATP formation. The polypeptide is Photosystem II CP43 reaction center protein (Drimys granadensis).